The chain runs to 89 residues: Small ribosomal subunit protein uS15 (89 aa).

The segment at 1-25 is disordered; sequence MSLDTTEKQQLINTHQTHGTDTGSA. Positions 8–25 are enriched in polar residues; it reads KQQLINTHQTHGTDTGSA.

This sequence belongs to the universal ribosomal protein uS15 family. As to quaternary structure, part of the 30S ribosomal subunit. Forms a bridge to the 50S subunit in the 70S ribosome, contacting the 23S rRNA.

One of the primary rRNA binding proteins, it binds directly to 16S rRNA where it helps nucleate assembly of the platform of the 30S subunit by binding and bridging several RNA helices of the 16S rRNA. Its function is as follows. Forms an intersubunit bridge (bridge B4) with the 23S rRNA of the 50S subunit in the ribosome. The polypeptide is Small ribosomal subunit protein uS15 (Synechococcus sp. (strain CC9605)).